A 237-amino-acid chain; its full sequence is Ribonuclease PH (237 aa).

Phosphate-binding positions include Arg-86 and 124-126; that span reads GTR.

Belongs to the RNase PH family. Homohexameric ring arranged as a trimer of dimers.

It carries out the reaction tRNA(n+1) + phosphate = tRNA(n) + a ribonucleoside 5'-diphosphate. Functionally, phosphorolytic 3'-5' exoribonuclease that plays an important role in tRNA 3'-end maturation. Removes nucleotide residues following the 3'-CCA terminus of tRNAs; can also add nucleotides to the ends of RNA molecules by using nucleoside diphosphates as substrates, but this may not be physiologically important. Probably plays a role in initiation of 16S rRNA degradation (leading to ribosome degradation) during starvation. This Cereibacter sphaeroides (strain KD131 / KCTC 12085) (Rhodobacter sphaeroides) protein is Ribonuclease PH.